A 454-amino-acid polypeptide reads, in one-letter code: UPF0210 protein BLA_0552 (454 aa).

Belongs to the UPF0210 family. In terms of assembly, homodimer.

In Bifidobacterium animalis subsp. lactis (strain AD011), this protein is UPF0210 protein BLA_0552.